The primary structure comprises 219 residues: Proteasome subunit beta type-9 (219 aa).

A propeptide spans Met-1 to Gly-20 (removed in mature form). The active-site Nucleophile is the Thr-21. Lys-53 and Lys-109 each carry N6-acetyllysine.

This sequence belongs to the peptidase T1B family. In terms of assembly, the 26S proteasome consists of a 20S proteasome core and two 19S regulatory subunits. The 20S proteasome core is composed of 28 subunits that are arranged in four stacked rings, resulting in a barrel-shaped structure. The two end rings are each formed by seven alpha subunits, and the two central rings are each formed by seven beta subunits. The catalytic chamber with the active sites is on the inside of the barrel. Component of the immunoproteasome, where it displaces the equivalent housekeeping subunit PSMB6. Component of the spermatoproteasome, a form of the proteasome specifically found in testis. Post-translationally, autocleaved. The resulting N-terminal Thr residue of the mature subunit is responsible for the nucleophile proteolytic activity.

The protein resides in the cytoplasm. It is found in the nucleus. The enzyme catalyses Cleavage of peptide bonds with very broad specificity.. Functionally, the proteasome is a multicatalytic proteinase complex which is characterized by its ability to cleave peptides with Arg, Phe, Tyr, Leu, and Glu adjacent to the leaving group at neutral or slightly basic pH. The proteasome has an ATP-dependent proteolytic activity. This subunit is involved in antigen processing to generate class I binding peptides. The chain is Proteasome subunit beta type-9 (Psmb9) from Mus spicilegus (Steppe mouse).